The chain runs to 373 residues: Nuclear hormone receptor family member nhr-69 (373 aa).

The segment at residues 3-78 is a DNA-binding region (nuclear receptor); sequence EEICHICNDK…AGMKSNAIQN (76 aa). 2 NR C4-type zinc fingers span residues 6–26 and 42–66; these read CHIC…CDGC and CRFE…LQKC. In terms of domain architecture, NR LBD spans 93-344; it reads EKEDLIDQLV…SLMEELILND (252 aa).

The protein belongs to the nuclear hormone receptor family. In terms of assembly, interacts with R-SMAD daf-8. Expressed in the ASI neurons, hypodermis, and in tail neurons.

It is found in the nucleus. Its function is as follows. Orphan nuclear receptor which, in cooperation with R-SMAD daf-8, modulates the Insulin/IGF-1-like signaling (IIS) pathway, perhaps by regulating expression of the potassium channel exp-2, which in turn modulates the secretion of insulin-like peptide daf-28. This chain is Nuclear hormone receptor family member nhr-69 (nhr-69), found in Caenorhabditis elegans.